The primary structure comprises 169 residues: Cysteine synthase B (169 aa).

An N6-(pyridoxal phosphate)lysine modification is found at Lys-45. Residue Asn-75 coordinates pyridoxal 5'-phosphate. Positions 146–169 (ANGDNPEAHYTSTGPEIWRQTGGT) are disordered.

The protein belongs to the cysteine synthase/cystathionine beta-synthase family. Requires pyridoxal 5'-phosphate as cofactor.

The enzyme catalyses O-acetyl-L-serine + hydrogen sulfide = L-cysteine + acetate. Its pathway is amino-acid biosynthesis; L-cysteine biosynthesis; L-cysteine from L-serine: step 2/2. In Pseudomonas syringae pv. syringae, this protein is Cysteine synthase B (cysM).